The chain runs to 331 residues: Cathepsin S (331 aa).

A signal peptide spans 1-16; that stretch reads MNWLVWALLLCSSAMA. Residues 17 to 114 constitute a propeptide, activation peptide; sequence HVHRDPTLDH…VTYKSDPNQK (98 aa). N-linked (GlcNAc...) asparagine glycosylation occurs at N104. Cystine bridges form between C126/C224, C136/C180, C170/C213, and C272/C320. The active site involves C139. Catalysis depends on residues H278 and N298.

The protein belongs to the peptidase C1 family. Monomer.

It is found in the lysosome. The protein localises to the secreted. It localises to the cytoplasmic vesicle. The protein resides in the phagosome. The catalysed reaction is Similar to cathepsin L, but with much less activity on Z-Phe-Arg-|-NHMec, and more activity on the Z-Val-Val-Arg-|-Xaa compound.. Its function is as follows. Thiol protease. Key protease responsible for the removal of the invariant chain from MHC class II molecules and MHC class II antigen presentation. The bond-specificity of this proteinase is in part similar to the specificities of cathepsin L. This Bos taurus (Bovine) protein is Cathepsin S (CTSS).